Reading from the N-terminus, the 242-residue chain is Mannosyl-3-phosphoglycerate phosphatase (242 aa).

Residue aspartate 8 is the Nucleophile of the active site. The Mg(2+) site is built by aspartate 8, aspartate 10, serine 169, and aspartate 204.

It belongs to the HAD-like hydrolase superfamily. MPGP family. Requires Mg(2+) as cofactor.

It localises to the cytoplasm. It catalyses the reaction 2-O-(alpha-D-mannosyl)-3-phosphoglycerate + H2O = (2R)-2-O-(alpha-D-mannosyl)-glycerate + phosphate. It functions in the pathway carbohydrate biosynthesis; 2-(alpha-D-mannosyl)-D-glycerate biosynthesis; 2-(alpha-D-mannosyl)-D-glycerate from GDP-alpha-D-mannose (MPG route): step 2/2. In terms of biological role, hydrolyzes mannosyl-3-phosphoglycerate (MPG) to form the osmolyte mannosylglycerate (MG). This Pyrococcus furiosus (strain ATCC 43587 / DSM 3638 / JCM 8422 / Vc1) protein is Mannosyl-3-phosphoglycerate phosphatase.